A 703-amino-acid polypeptide reads, in one-letter code: uncharacterized protein (703 aa).

The next 4 membrane-spanning stretches (helical) occupy residues 23–43 (IAMSGAISAGAYSAGVFDFLI), 69–89 (ALSGASAGAITAAIGVIAAGG), 143–163 (PVISVLNANVLTAIGAEALEA), and 250–270 (PPEWLAFANAALASGAFPIGL). One can recognise a PNPLA domain in the interval 23-335 (IAMSGAISAG…INNDPFEFVR (313 aa)). Residues 72-76 (GASAG) carry the GXSXG motif. Residue serine 74 is the Nucleophile of the active site. Aspartate 322 acts as the Proton acceptor in catalysis. Residues 322-324 (DGG) carry the DGA/G motif. 3 helical membrane-spanning segments follow: residues 357-377 (VIMIAPFPEGPPFLGDGEPPL), 432-452 (ETFSIASGLLGGFGGFVLEAF), and 644-664 (ILSTLAGAAGANCQVWLAPWT).

It localises to the cell membrane. This is an uncharacterized protein from Sinorhizobium fredii (strain NBRC 101917 / NGR234).